The sequence spans 213 residues: GrpE protein homolog, mitochondrial (213 aa).

The interval 35 to 55 (STEKQPEEATEQKATESSPEV) is disordered. Residues 38-55 (KQPEEATEQKATESSPEV) are compositionally biased toward basic and acidic residues.

Belongs to the GrpE family. As to quaternary structure, probable component of the PAM complex at least composed of a mitochondrial HSP70 protein, Roe1, TIM44, blp/TIM16 and TIM14.

It localises to the mitochondrion matrix. In terms of biological role, essential component of the PAM complex, a complex required for the translocation of transit peptide-containing proteins from the inner membrane into the mitochondrial matrix in an ATP-dependent manner. Seems to control the nucleotide-dependent binding of mitochondrial HSP70 to substrate proteins. This is GrpE protein homolog, mitochondrial (Roe1) from Drosophila melanogaster (Fruit fly).